Here is a 270-residue protein sequence, read N- to C-terminus: tRNA pseudouridine synthase A (270 aa).

The active-site Nucleophile is D60. An RNA binding region spans residues 107–111 (FHARF). Y118 is a substrate binding site. The tract at residues 168-172 (QCQSR) is interaction with tRNA.

It belongs to the tRNA pseudouridine synthase TruA family. As to quaternary structure, homodimer.

It carries out the reaction uridine(38/39/40) in tRNA = pseudouridine(38/39/40) in tRNA. In terms of biological role, formation of pseudouridine at positions 38, 39 and 40 in the anticodon stem and loop of transfer RNAs. This Escherichia coli (strain 55989 / EAEC) protein is tRNA pseudouridine synthase A.